A 455-amino-acid chain; its full sequence is Ammonium transporter Rh type B (455 aa).

The Cytoplasmic portion of the chain corresponds to M1–L10. Residues V11–V31 traverse the membrane as a helical segment. At R32–Y58 the chain is on the extracellular side. N46 is a glycosylation site (N-linked (GlcNAc...) asparagine). Residues P59–L79 traverse the membrane as a helical segment. Over Q80–G83 the chain is Cytoplasmic. A helical transmembrane segment spans residues F84–L104. The Extracellular segment spans residues Q105–E121. The chain crosses the membrane as a helical span at residues S122–G142. Residues K143–Q148 are Cytoplasmic-facing. A helical transmembrane segment spans residues L149 to S169. Residues L170 to A176 lie on the Extracellular side of the membrane. The helical transmembrane segment at G177–L197 threads the bilayer. Residues Y198–D216 are Cytoplasmic-facing. Residues L217–P237 traverse the membrane as a helical segment. Residues T238 to T247 are Extracellular-facing. Residues V248 to S270 form a helical membrane-spanning segment. Residues G271 to R274 lie on the Cytoplasmic side of the membrane. A helical membrane pass occupies residues L275–S295. A topological domain (extracellular) is located at residue E296. The chain crosses the membrane as a helical span at residues M297 to L317. The Cytoplasmic portion of the chain corresponds to G318 to N340. A helical transmembrane segment spans residues L341–T361. Residues H362–Q390 lie on the Extracellular side of the membrane. Residues L391–L411 form a helical membrane-spanning segment. The Cytoplasmic portion of the chain corresponds to L412–A455. Positions K413–P421 are interaction with ANK3.

The protein belongs to the ammonium transporter (TC 2.A.49) family. Rh subfamily. As to quaternary structure, interacts (via C-terminus) with ANK2 and ANK3; required for targeting to the basolateral membrane. N-glycosylated. In terms of tissue distribution, expressed in kidney by connecting segments and collecting tubules (at protein level).

It localises to the basolateral cell membrane. It is found in the cytoplasmic vesicle membrane. The catalysed reaction is NH4(+)(in) = NH4(+)(out). It catalyses the reaction methylamine(out) = methylamine(in). It carries out the reaction CO2(out) = CO2(in). In terms of biological role, ammonium transporter involved in the maintenance of acid-base homeostasis. Transports ammonium and its related derivative methylammonium across the basolateral plasma membrane of epithelial cells likely contributing to renal transepithelial ammonia transport and ammonia metabolism. May transport either NH4(+) or NH3 ammonia species predominantly mediating an electrogenic NH4(+) transport. May act as a CO2 channel providing for renal acid secretion. This is Ammonium transporter Rh type B (Rhbg) from Rattus norvegicus (Rat).